Reading from the N-terminus, the 279-residue chain is Oxygen-dependent coproporphyrinogen-III oxidase (279 aa).

Ser102 is a substrate binding site. Residues His106 and His116 each contribute to the a divalent metal cation site. The active-site Proton donor is His116. 118 to 120 (NTR) is a substrate binding site. The a divalent metal cation site is built by His149 and His179. Positions 244–279 (YVEFNLLYDRGTKFGLMTDGNVEAILMSLPPEVKFN) are important for dimerization.

This sequence belongs to the aerobic coproporphyrinogen-III oxidase family. As to quaternary structure, homodimer. A divalent metal cation is required as a cofactor.

The protein resides in the cytoplasm. It carries out the reaction coproporphyrinogen III + O2 + 2 H(+) = protoporphyrinogen IX + 2 CO2 + 2 H2O. Its pathway is porphyrin-containing compound metabolism; protoporphyrin-IX biosynthesis; protoporphyrinogen-IX from coproporphyrinogen-III (O2 route): step 1/1. In terms of biological role, involved in the heme biosynthesis. Catalyzes the aerobic oxidative decarboxylation of propionate groups of rings A and B of coproporphyrinogen-III to yield the vinyl groups in protoporphyrinogen-IX. The polypeptide is Oxygen-dependent coproporphyrinogen-III oxidase (Rickettsia rickettsii (strain Iowa)).